Consider the following 432-residue polypeptide: Mitochondrial distribution and morphology protein 12 (432 aa).

An SMP-LTD domain is found at Met-1 to Ile-432. 2 disordered regions span residues Trp-182–Arg-273 and Gln-354–Gln-377. A compositionally biased stretch (low complexity) spans Thr-214 to Ser-234. Basic and acidic residues-rich tracts occupy residues Thr-243–Asp-253 and Gln-355–Pro-364.

This sequence belongs to the MDM12 family. As to quaternary structure, component of the ER-mitochondria encounter structure (ERMES) or MDM complex, composed of mmm1, mdm10, mdm12 and mdm34. A mmm1 homodimer associates with one molecule of mdm12 on each side in a pairwise head-to-tail manner, and the SMP-LTD domains of mmm1 and mdm12 generate a continuous hydrophobic tunnel for phospholipid trafficking.

Its subcellular location is the mitochondrion outer membrane. It is found in the endoplasmic reticulum membrane. Its function is as follows. Component of the ERMES/MDM complex, which serves as a molecular tether to connect the endoplasmic reticulum (ER) and mitochondria. Components of this complex are involved in the control of mitochondrial shape and protein biogenesis, and function in nonvesicular lipid trafficking between the ER and mitochondria. Mdm12 is required for the interaction of the ER-resident membrane protein mmm1 and the outer mitochondrial membrane-resident beta-barrel protein mdm10. The mdm12-mmm1 subcomplex functions in the major beta-barrel assembly pathway that is responsible for biogenesis of all mitochondrial outer membrane beta-barrel proteins, and acts in a late step after the SAM complex. The mdm10-mdm12-mmm1 subcomplex further acts in the TOM40-specific pathway after the action of the mdm12-mmm1 complex. Essential for establishing and maintaining the structure of mitochondria and maintenance of mtDNA nucleoids. This chain is Mitochondrial distribution and morphology protein 12, found in Aspergillus oryzae (strain ATCC 42149 / RIB 40) (Yellow koji mold).